A 153-amino-acid chain; its full sequence is Membrane protein FAM174B (153 aa).

Residues 1–27 (MSALPPQPPPPLLLLLLALLAAPAALA) form the signal peptide. Residues 28–84 (RRAESASASQPEAEHQPPPGPGNATQLGSGMAGGGSSNSSVDAVVTRISSLLRDLPT) lie on the Extracellular side of the membrane. The segment at 31–67 (ESASASQPEAEHQPPPGPGNATQLGSGMAGGGSSNSS) is disordered. The N-linked (GlcNAc...) asparagine glycan is linked to Asn-50. A helical transmembrane segment spans residues 85–105 (LKATVIVACAFSALLIACLLL). Residues 106–153 (RVFRLGKRLKKTRKYDIITTPAERVEMAPLNEEDDEDEDSTVFDIKYR) lie on the Cytoplasmic side of the membrane.

Belongs to the FAM174 family.

It is found in the cell membrane. The protein resides in the golgi apparatus. Functionally, essential for Golgi structural integrity. This Mus musculus (Mouse) protein is Membrane protein FAM174B (Fam174b).